A 317-amino-acid polypeptide reads, in one-letter code: L-lactate dehydrogenase (317 aa).

Residues valine 17, aspartate 38, lysine 43, tyrosine 69, and 83 to 84 contribute to the NAD(+) site; that span reads GA. Substrate-binding residues include glutamine 86 and arginine 92. NAD(+) contacts are provided by residues serine 105, 122–124, and serine 147; that span reads ATN. 124-127 is a substrate binding site; that stretch reads NPVD. 152–155 serves as a coordination point for substrate; that stretch reads DTAR. 2 residues coordinate beta-D-fructose 1,6-bisphosphate: arginine 157 and histidine 172. Histidine 179 acts as the Proton acceptor in catalysis. Tyrosine 224 is subject to Phosphotyrosine. Threonine 233 contacts substrate.

The protein belongs to the LDH/MDH superfamily. LDH family. In terms of assembly, homotetramer.

Its subcellular location is the cytoplasm. The catalysed reaction is (S)-lactate + NAD(+) = pyruvate + NADH + H(+). The protein operates within fermentation; pyruvate fermentation to lactate; (S)-lactate from pyruvate: step 1/1. With respect to regulation, allosterically activated by fructose 1,6-bisphosphate (FBP). Functionally, catalyzes the conversion of lactate to pyruvate. This is L-lactate dehydrogenase from Bacillus caldotenax.